The chain runs to 335 residues: Cholinephosphotransferase 1 (335 aa).

Helical transmembrane passes span 53-73 (PNAI…PLIA) and 84-108 (FWAY…GKQA). Residue asparagine 54 participates in CDP-choline binding. Mg(2+)-binding residues include aspartate 101 and aspartate 104. A CDP-choline-binding site is contributed by arginine 109. Transmembrane regions (helical) follow at residues 116–140 (PLGE…SCIA), 151–169 (FFCC…WQTY), 181–197 (VTEV…VSAF), 213–238 (ELKF…RIIF), 267–276 (IGPGLLFLDQ), and 284–313 (EYVV…IAAH). Residue aspartate 122 coordinates Mg(2+). Histidine 123 functions as the Proton acceptor in the catalytic mechanism. Aspartate 126 provides a ligand contact to Mg(2+).

The protein belongs to the CDP-alcohol phosphatidyltransferase class-I family. The cofactor is Mg(2+). It depends on Mn(2+) as a cofactor.

The protein localises to the golgi apparatus membrane. The enzyme catalyses CDP-choline + a 1,2-diacyl-sn-glycerol = a 1,2-diacyl-sn-glycero-3-phosphocholine + CMP + H(+). It catalyses the reaction 1-octadecanoyl-2-(5Z,8Z,11Z,14Z-eicosatetraenoyl)-sn-glycerol + CDP-choline = 1-octadecanoyl-2-(5Z,8Z,11Z,14Z-eicosatetraenoyl)-sn-glycero-3-phosphocholine + CMP + H(+). The catalysed reaction is 1-hexadecanoyl-2-(9Z-octadecenoyl)-sn-glycerol + CDP-choline = 1-hexadecanoyl-2-(9Z-octadecenoyl)-sn-glycero-3-phosphocholine + CMP + H(+). It carries out the reaction 1-hexadecanoyl-2-(4Z,7Z,10Z,13Z,16Z,19Z-docosahexaenoyl)-sn-glycerol + CDP-choline = 1-hexadecanoyl-2-(4Z,7Z,10Z,13Z,16Z,19Z-docosahexaenoyl)-sn-glycero-3-phosphocholine + CMP + H(+). The enzyme catalyses 1,2-dioctanoyl-sn-glycerol + CDP-choline = 1,2-dioctanoyl-sn-glycero-3-phosphocholine + CMP + H(+). The protein operates within phospholipid metabolism; phosphatidylcholine biosynthesis; phosphatidylcholine from phosphocholine: step 2/2. In terms of biological role, catalyzes the final step of de novo phosphatidylcholine (PC) synthesis, i.e. the transfer of choline phosphate from CDP-choline to the free hydroxyl of a diacylglycerol (DAG), producing a PC. It thereby plays a central role in the formation and maintenance of vesicular membranes. The protein is Cholinephosphotransferase 1 (CHPT1) of Gallus gallus (Chicken).